We begin with the raw amino-acid sequence, 553 residues long: Rhodopsin kinase GRK7 (553 aa).

Ser-36 bears the Phosphoserine; by PKA mark. One can recognise an RGS domain in the interval 56 to 176 (FNSLCEQQPI…LVSPFYDKFL (121 aa)). The 264-residue stretch at 191–454 (FEEFRVLGKG…SDDPRKHHFF (264 aa)) folds into the Protein kinase domain. Residues 197 to 205 (LGKGGFGEV) and Lys-220 contribute to the ATP site. Residue Asp-316 is the Proton acceptor of the active site. The AGC-kinase C-terminal domain maps to 455–520 (KTINFPRLEA…GAVPIAWQEE (66 aa)). At Cys-550 the chain carries Cysteine methyl ester. Cys-550 carries the S-geranylgeranyl cysteine lipid modification. The propeptide at 551–553 (LLL) is removed in mature form.

This sequence belongs to the protein kinase superfamily. AGC Ser/Thr protein kinase family. GPRK subfamily. In terms of assembly, interacts (when prenylated) with PDE6D; this promotes release from membranes. In terms of processing, autophosphorylated in vitro at Ser-490. Phosphorylation at Ser-36 is regulated by light and activated by cAMP.

The protein resides in the membrane. The catalysed reaction is L-threonyl-[rhodopsin] + ATP = O-phospho-L-threonyl-[rhodopsin] + ADP + H(+). It carries out the reaction L-seryl-[rhodopsin] + ATP = O-phospho-L-seryl-[rhodopsin] + ADP + H(+). Inhibited by phosphorylation of Ser-36. Retina-specific kinase involved in the shutoff of the photoresponse and adaptation to changing light conditions via cone opsin phosphorylation, including rhodopsin (RHO). The polypeptide is Rhodopsin kinase GRK7 (GRK7) (Sus scrofa (Pig)).